We begin with the raw amino-acid sequence, 141 residues long: Large-conductance mechanosensitive channel (141 aa).

Helical transmembrane passes span 8-28 (FALK…AAFG), 38-58 (IIMP…FFPL), and 80-100 (GNFL…FLIV).

It belongs to the MscL family. Homopentamer.

It is found in the cell inner membrane. In terms of biological role, channel that opens in response to stretch forces in the membrane lipid bilayer. May participate in the regulation of osmotic pressure changes within the cell. This Beijerinckia indica subsp. indica (strain ATCC 9039 / DSM 1715 / NCIMB 8712) protein is Large-conductance mechanosensitive channel.